A 170-amino-acid chain; its full sequence is NADH-ubiquinone oxidoreductase chain 6 (170 aa).

5 helical membrane passes run 1-21 (MIYM…AVAS), 26-46 (FYAA…IVSF), 49-69 (SFLS…VFAY), 86-106 (VVFY…FLGG), and 138-158 (WVII…GIWV).

Belongs to the complex I subunit 6 family. As to quaternary structure, core subunit of respiratory chain NADH dehydrogenase (Complex I) which is composed of 45 different subunits.

Its subcellular location is the mitochondrion inner membrane. It catalyses the reaction a ubiquinone + NADH + 5 H(+)(in) = a ubiquinol + NAD(+) + 4 H(+)(out). In terms of biological role, core subunit of the mitochondrial membrane respiratory chain NADH dehydrogenase (Complex I) which catalyzes electron transfer from NADH through the respiratory chain, using ubiquinone as an electron acceptor. Essential for the catalytic activity and assembly of complex I. The sequence is that of NADH-ubiquinone oxidoreductase chain 6 (mt-nd6) from Xenopus laevis (African clawed frog).